Reading from the N-terminus, the 316-residue chain is uncharacterized protein (316 aa).

The helical transmembrane segment at 12–34 (RWVCLTSVILFCFCIAVMRYGGV) threads the bilayer.

It is found in the membrane. This is an uncharacterized protein from Treponema pallidum (strain Nichols).